A 414-amino-acid polypeptide reads, in one-letter code: tRNA N6-adenosine threonylcarbamoyltransferase, mitochondrial (414 aa).

The N-terminal 29 residues, Met-1–His-29, are a transit peptide targeting the mitochondrion. Residues Lys-74 and Lys-140 each carry the N6-acetyllysine modification. 2 residues coordinate a divalent metal cation: His-147 and His-151. Substrate contacts are provided by residues Leu-169 to Gly-173 and Asp-202. Lys-203 carries the post-translational modification N6-acetyllysine. Substrate-binding residues include Gly-222 and Glu-226. N6-acetyllysine occurs at positions 230 and 299. Substrate-binding positions include Ser-329 to Asn-330 and Thr-357. Asp-358 is a binding site for a divalent metal cation.

Belongs to the KAE1 / TsaD family. In terms of assembly, monomer. A divalent metal cation is required as a cofactor.

It localises to the mitochondrion. It carries out the reaction L-threonylcarbamoyladenylate + adenosine(37) in tRNA = N(6)-L-threonylcarbamoyladenosine(37) in tRNA + AMP + H(+). In terms of biological role, required for the formation of a threonylcarbamoyl group on adenosine at position 37 (t(6)A37) in mitochondrial tRNAs that read codons beginning with adenine. Probably involved in the transfer of the threonylcarbamoyl moiety of threonylcarbamoyl-AMP (TC-AMP) to the N6 group of A37. Involved in mitochondrial genome maintenance. This chain is tRNA N6-adenosine threonylcarbamoyltransferase, mitochondrial, found in Mus musculus (Mouse).